Here is a 207-residue protein sequence, read N- to C-terminus: Large ribosomal subunit protein uL3c (207 aa).

The interval 129–148 (TRGPMTHGSKNHRAPGSIGM) is disordered.

It belongs to the universal ribosomal protein uL3 family. Part of the 50S ribosomal subunit.

Its subcellular location is the plastid. The protein localises to the chloroplast. In terms of biological role, one of the primary rRNA binding proteins, it binds directly near the 3'-end of the 23S rRNA, where it nucleates assembly of the 50S subunit. This chain is Large ribosomal subunit protein uL3c (rpl3), found in Phaeodactylum tricornutum (strain CCAP 1055/1).